Reading from the N-terminus, the 352-residue chain is Ion-translocating oxidoreductase complex subunit D (352 aa).

5 consecutive transmembrane segments (helical) span residues Ile-20 to Gly-40, Gly-42 to Leu-62, Ala-78 to Ala-109, Pro-123 to Leu-143, and Ile-148 to Ala-168. Residue Thr-187 is modified to FMN phosphoryl threonine. Transmembrane regions (helical) follow at residues Ile-214 to Leu-234, Trp-242 to Phe-262, Leu-267 to Leu-287, Leu-301 to Pro-321, and Asp-322 to Thr-342.

It belongs to the NqrB/RnfD family. The complex is composed of six subunits: RsxA, RsxB, RsxC, RsxD, RsxE and RsxG. The cofactor is FMN.

The protein resides in the cell inner membrane. Its function is as follows. Part of a membrane-bound complex that couples electron transfer with translocation of ions across the membrane. Required to maintain the reduced state of SoxR. This is Ion-translocating oxidoreductase complex subunit D from Escherichia coli O139:H28 (strain E24377A / ETEC).